The primary structure comprises 166 residues: Endoribonuclease YbeY (166 aa).

3 residues coordinate Zn(2+): H132, H136, and H142.

This sequence belongs to the endoribonuclease YbeY family. Zn(2+) is required as a cofactor.

Its subcellular location is the cytoplasm. In terms of biological role, single strand-specific metallo-endoribonuclease involved in late-stage 70S ribosome quality control and in maturation of the 3' terminus of the 16S rRNA. This chain is Endoribonuclease YbeY, found in Clostridium botulinum (strain Langeland / NCTC 10281 / Type F).